The sequence spans 88 residues: LYR motif-containing protein 2 (88 aa).

The N-terminal 19 residues, 1-19, are a transit peptide targeting the mitochondrion; sequence MAASRLPPATLTLKQFMRR.

The protein belongs to the complex I LYR family.

Its subcellular location is the mitochondrion. Involved in efficient integration of the N-module into mitochondrial respiratory chain complex I. The chain is LYR motif-containing protein 2 (Lyrm2) from Rattus norvegicus (Rat).